The chain runs to 249 residues: Transmembrane protein 150C (249 aa).

Residues 1 to 9 (MDGKKCSVW) are Cytoplasmic-facing. The chain crosses the membrane as a helical span at residues 10–30 (MFLPLVFTLFTSAGLWIVYFI). At 31-64 (AVEDDKILPLNSAERKPGVKHAPYISIAGDDPPA) the chain is on the extracellular side. Residues 65–85 (SCVFSQVMNMAAFLALVVAVL) form a helical membrane-spanning segment. Topologically, residues 86-97 (RFIQLKPKVLNP) are cytoplasmic. A helical membrane pass occupies residues 98–118 (WLNISGLVALCLASFGMTLLG). The Extracellular portion of the chain corresponds to 119–130 (NFQLTNDEEIHN). The chain crosses the membrane as a helical span at residues 131-151 (VGTSLTFGFGTLTCWIQAALT). Over 152–168 (LKVNIKNEGRRVGIPRV) the chain is Cytoplasmic. The chain crosses the membrane as a helical span at residues 169-189 (ILSASITLCVVLYFILMAQSI). Topologically, residues 190 to 192 (HMY) are extracellular. Residues 193–213 (AARVQWGLVMCFLSYFGTFAV) traverse the membrane as a helical segment. Topologically, residues 214–249 (EFRHYRYEIVCSEYQENFLSFSESLSEASEYQTDQV) are cytoplasmic.

The protein belongs to the DRAM/TMEM150 family.

The protein resides in the cell membrane. Its subcellular location is the lysosome membrane. The enzyme catalyses Ca(2+)(in) = Ca(2+)(out). The catalysed reaction is Na(+)(in) = Na(+)(out). It carries out the reaction K(+)(in) = K(+)(out). It catalyses the reaction Mg(2+)(in) = Mg(2+)(out). Nonselective cationic channel with high permeability to Ca(2+). Component of a mechanosensitive cation channel, confers mechanically activated (MA) currents with slow inactivation kinetics. May contribute to proprioception. The polypeptide is Transmembrane protein 150C (Homo sapiens (Human)).